A 248-amino-acid chain; its full sequence is Glutathione S-transferase omega-2 (248 aa).

The 80-residue stretch at 22–101 (GVIRIYSMRF…YLDDVYPGRK (80 aa)) folds into the GST N-terminal domain. The active-site Nucleophile is the Cys-32. Glutathione is bound by residues Lys-59, Ile-72, and 85–86 (ES). One can recognise a GST C-terminal domain in the interval 106–231 (DPYERARQKM…VFLGFLNLYF (126 aa)).

The protein belongs to the GST superfamily. Omega family.

It catalyses the reaction RX + glutathione = an S-substituted glutathione + a halide anion + H(+). The enzyme catalyses L-dehydroascorbate + 2 glutathione = glutathione disulfide + L-ascorbate. The catalysed reaction is methylarsonate + 2 glutathione + H(+) = methylarsonous acid + glutathione disulfide + H2O. Its function is as follows. Exhibits glutathione-dependent thiol transferase activity. Has high dehydroascorbate reductase activity and may contribute to the recycling of ascorbic acid. Participates in the biotransformation of inorganic arsenic and reduces monomethylarsonic acid (MMA). The polypeptide is Glutathione S-transferase omega-2 (Gsto2) (Mus musculus (Mouse)).